We begin with the raw amino-acid sequence, 308 residues long: L-lactate dehydrogenase 2 (308 aa).

NAD(+) is bound by residues Val14, Asp35, Tyr65, and 79-80 (GA). Arg88 lines the substrate pocket. Residue Ser101 coordinates NAD(+). 120 to 123 (NPVD) is a binding site for substrate. Residue Thr143 coordinates NAD(+). 148-151 (DTAR) provides a ligand contact to substrate. His175 acts as the Proton acceptor in catalysis. Thr225 is a binding site for substrate.

This sequence belongs to the LDH/MDH superfamily. LDH family. In terms of assembly, homotetramer.

It is found in the cytoplasm. The enzyme catalyses (S)-lactate + NAD(+) = pyruvate + NADH + H(+). It participates in fermentation; pyruvate fermentation to lactate; (S)-lactate from pyruvate: step 1/1. Catalyzes the conversion of lactate to pyruvate. The polypeptide is L-lactate dehydrogenase 2 (Lactobacillus johnsonii (strain CNCM I-12250 / La1 / NCC 533)).